A 435-amino-acid chain; its full sequence is Xylose isomerase (435 aa).

Residues H99 and D102 contribute to the active site. 7 residues coordinate Mg(2+): E230, E266, H269, D294, D305, D307, and D337.

The protein belongs to the xylose isomerase family. In terms of assembly, homotetramer. The cofactor is Mg(2+).

The protein resides in the cytoplasm. It carries out the reaction alpha-D-xylose = alpha-D-xylulofuranose. In Listeria welshimeri serovar 6b (strain ATCC 35897 / DSM 20650 / CCUG 15529 / CIP 8149 / NCTC 11857 / SLCC 5334 / V8), this protein is Xylose isomerase.